We begin with the raw amino-acid sequence, 390 residues long: DNA polymerase IV (390 aa).

The UmuC domain occupies V6–G187. D10 and D105 together coordinate Mg(2+). E106 is an active-site residue.

This sequence belongs to the DNA polymerase type-Y family. Monomer. Mg(2+) serves as cofactor.

Its subcellular location is the cytoplasm. The catalysed reaction is DNA(n) + a 2'-deoxyribonucleoside 5'-triphosphate = DNA(n+1) + diphosphate. In terms of biological role, poorly processive, error-prone DNA polymerase involved in untargeted mutagenesis. Copies undamaged DNA at stalled replication forks, which arise in vivo from mismatched or misaligned primer ends. These misaligned primers can be extended by PolIV. Exhibits no 3'-5' exonuclease (proofreading) activity. May be involved in translesional synthesis, in conjunction with the beta clamp from PolIII. In Dehalococcoides mccartyi (strain CBDB1), this protein is DNA polymerase IV.